Reading from the N-terminus, the 383-residue chain is Dual-specificity RNA methyltransferase RlmN (383 aa).

Catalysis depends on glutamate 95, which acts as the Proton acceptor. The region spanning 101–349 is the Radical SAM core domain; the sequence is EETRGTLCVS…TTVRKTRGDD (249 aa). An intrachain disulfide couples cysteine 108 to cysteine 354. Positions 115, 119, and 122 each coordinate [4Fe-4S] cluster. S-adenosyl-L-methionine is bound by residues 180 to 181, serine 212, 234 to 236, and asparagine 311; these read GE and SLH. The active-site S-methylcysteine intermediate is cysteine 354.

The protein belongs to the radical SAM superfamily. RlmN family. It depends on [4Fe-4S] cluster as a cofactor.

It localises to the cytoplasm. The catalysed reaction is adenosine(2503) in 23S rRNA + 2 reduced [2Fe-2S]-[ferredoxin] + 2 S-adenosyl-L-methionine = 2-methyladenosine(2503) in 23S rRNA + 5'-deoxyadenosine + L-methionine + 2 oxidized [2Fe-2S]-[ferredoxin] + S-adenosyl-L-homocysteine. The enzyme catalyses adenosine(37) in tRNA + 2 reduced [2Fe-2S]-[ferredoxin] + 2 S-adenosyl-L-methionine = 2-methyladenosine(37) in tRNA + 5'-deoxyadenosine + L-methionine + 2 oxidized [2Fe-2S]-[ferredoxin] + S-adenosyl-L-homocysteine. Functionally, specifically methylates position 2 of adenine 2503 in 23S rRNA and position 2 of adenine 37 in tRNAs. m2A2503 modification seems to play a crucial role in the proofreading step occurring at the peptidyl transferase center and thus would serve to optimize ribosomal fidelity. The chain is Dual-specificity RNA methyltransferase RlmN from Paraburkholderia phytofirmans (strain DSM 17436 / LMG 22146 / PsJN) (Burkholderia phytofirmans).